Consider the following 236-residue polypeptide: UPF0257 lipoprotein YnfC (236 aa).

A signal peptide spans 1-16 (MKKPLLLTLLCMILAG). Cys17 carries N-palmitoyl cysteine lipidation. The S-diacylglycerol cysteine moiety is linked to residue Cys17.

This sequence belongs to the UPF0257 family.

Its subcellular location is the cell membrane. The polypeptide is UPF0257 lipoprotein YnfC (Salmonella dublin (strain CT_02021853)).